The chain runs to 437 residues: ATP-dependent protease ATPase subunit HslU (437 aa).

Residues Val18, 60–65, Asp249, Glu315, and Arg387 contribute to the ATP site; that span reads GVGKTE.

It belongs to the ClpX chaperone family. HslU subfamily. As to quaternary structure, a double ring-shaped homohexamer of HslV is capped on each side by a ring-shaped HslU homohexamer. The assembly of the HslU/HslV complex is dependent on binding of ATP.

The protein resides in the cytoplasm. In terms of biological role, ATPase subunit of a proteasome-like degradation complex; this subunit has chaperone activity. The binding of ATP and its subsequent hydrolysis by HslU are essential for unfolding of protein substrates subsequently hydrolyzed by HslV. HslU recognizes the N-terminal part of its protein substrates and unfolds these before they are guided to HslV for hydrolysis. This chain is ATP-dependent protease ATPase subunit HslU, found in Rhodospirillum centenum (strain ATCC 51521 / SW).